Consider the following 219-residue polypeptide: 7-cyano-7-deazaguanine synthase (219 aa).

11-21 (FSGGQDSTTCL) lines the ATP pocket. Zn(2+) is bound by residues cysteine 188, cysteine 196, cysteine 199, and cysteine 202.

This sequence belongs to the QueC family. Requires Zn(2+) as cofactor.

The enzyme catalyses 7-carboxy-7-deazaguanine + NH4(+) + ATP = 7-cyano-7-deazaguanine + ADP + phosphate + H2O + H(+). It participates in purine metabolism; 7-cyano-7-deazaguanine biosynthesis. Its function is as follows. Catalyzes the ATP-dependent conversion of 7-carboxy-7-deazaguanine (CDG) to 7-cyano-7-deazaguanine (preQ(0)). The chain is 7-cyano-7-deazaguanine synthase from Glaesserella parasuis serovar 5 (strain SH0165) (Haemophilus parasuis).